The following is a 177-amino-acid chain: Large ribosomal subunit protein uL6 (177 aa).

The protein belongs to the universal ribosomal protein uL6 family. As to quaternary structure, part of the 50S ribosomal subunit.

This protein binds to the 23S rRNA, and is important in its secondary structure. It is located near the subunit interface in the base of the L7/L12 stalk, and near the tRNA binding site of the peptidyltransferase center. In Methylorubrum extorquens (strain CM4 / NCIMB 13688) (Methylobacterium extorquens), this protein is Large ribosomal subunit protein uL6.